Here is a 262-residue protein sequence, read N- to C-terminus: Pyridoxine 5'-phosphate synthase (262 aa).

Asn-6 is a binding site for 3-amino-2-oxopropyl phosphate. 8–9 (DH) contributes to the 1-deoxy-D-xylulose 5-phosphate binding site. Arg-17 provides a ligand contact to 3-amino-2-oxopropyl phosphate. His-41 (proton acceptor) is an active-site residue. 1-deoxy-D-xylulose 5-phosphate is bound by residues Arg-43 and His-48. The active-site Proton acceptor is Glu-68. Thr-98 is a 1-deoxy-D-xylulose 5-phosphate binding site. Residue His-210 is the Proton donor of the active site. Residues Gly-211 and 232–233 (GQ) each bind 3-amino-2-oxopropyl phosphate.

The protein belongs to the PNP synthase family. In terms of assembly, homooctamer; tetramer of dimers.

It is found in the cytoplasm. The enzyme catalyses 3-amino-2-oxopropyl phosphate + 1-deoxy-D-xylulose 5-phosphate = pyridoxine 5'-phosphate + phosphate + 2 H2O + H(+). The protein operates within cofactor biosynthesis; pyridoxine 5'-phosphate biosynthesis; pyridoxine 5'-phosphate from D-erythrose 4-phosphate: step 5/5. Catalyzes the complicated ring closure reaction between the two acyclic compounds 1-deoxy-D-xylulose-5-phosphate (DXP) and 3-amino-2-oxopropyl phosphate (1-amino-acetone-3-phosphate or AAP) to form pyridoxine 5'-phosphate (PNP) and inorganic phosphate. This chain is Pyridoxine 5'-phosphate synthase, found in Campylobacter jejuni subsp. jejuni serotype O:23/36 (strain 81-176).